Consider the following 191-residue polypeptide: Large ribosomal subunit protein eL6 (191 aa).

It belongs to the eukaryotic ribosomal protein eL6 family.

This chain is Large ribosomal subunit protein eL6 (RPL6), found in Tetrahymena thermophila (strain SB210).